A 491-amino-acid polypeptide reads, in one-letter code: Pre-glycoprotein polyprotein GP complex (491 aa).

A lipid anchor (N-myristoyl glycine; by host) is attached at G2. Residues 2–17 (GQIVTFFQEVPHVIEE) are Extracellular-facing. A helical membrane pass occupies residues 18–33 (VMNIVLIALSVLAVLK). The Cytoplasmic segment spans residues 34–58 (GLYNFATCGLVGLVTFLLLCGRSCT). Zn(2+) is bound at residue C57. Topologically, residues 59 to 432 (TSLYKGVYEL…QGKTPLGLVD (374 aa)) are extracellular. N-linked (GlcNAc...) asparagine; by host glycans are attached at residues N79, N89, N99, N109, N119, and N167. 6 disulfides stabilise this stretch: C86–C231, C118–C155, C180–C212, C279–C292, C301–C310, and C364–C385. N224 carries an N-linked (GlcNAc...) asparagine; by host glycan. N-linked (GlcNAc...) asparagine; by host glycosylation is found at N365, N373, N390, and N395. A helical transmembrane segment spans residues 433-453 (LFVFSTSFYLISIFLHLVKIP). The Cytoplasmic segment spans residues 454–491 (THRHIVGKSCPKPHRLNHMGICSCGLYKQPGVPVKWKR). Zn(2+)-binding residues include H455, H457, C463, H467, C475, and C477.

The protein belongs to the arenaviridae GPC protein family. As to quaternary structure, interacts with glycoprotein G2. Part of the GP complex (GP-C) together with glycoprotein G1 and glycoprotein G2. The GP-complex interacts with protein Z, which interacts with ribonucleocapsid; these interactions may induce virion budding. In terms of assembly, homotrimer; disulfide-linked. In pre-fusion state, G1 homotrimers bind G2 homotrimers via ionic interactions. Part of the GP complex (GP-C) together with glycoprotein G2 and the stable signal peptide. Interacts with the primary host receptor DAG1 on the cell surface; this interaction occurs at pH 8.0 but not at pH 6.0 and below. Upon virus internalization and at endosomal pH, interacts with the host lysosomal protein LAMP1; this interaction mediates G1 dissociation from GP-C and membrane fusion. The GP-complex interacts with protein Z, which interacts with ribonucleocapsid; these interactions may induce virion budding. Homotrimer. Interacts with the stable signal peptide. In pre-fusion state, G2 homotrimers bind G1 homotrimers via ionic interactions. Part of the GP complex (GP-C) together with glycoprotein G1 and the stable signal peptide. Acidification in the endosome triggers rearrangements, which ultimately leads to a 6 helix bundle formed by the two heptad repeat domains (HR1 and HR2) in post-fusion state. The GP-complex interacts with protein Z, which interacts with ribonucleocapsid; these interactions may induce virion budding. Post-translationally, specific enzymatic cleavages in vivo yield mature proteins. GP-C polyprotein is cleaved in the endoplasmic reticulum by the host protease MBTPS1. Only cleaved glycoprotein is incorporated into virions. In terms of processing, the SSP remains stably associated with the GP complex following cleavage by signal peptidase and plays crucial roles in the trafficking of GP through the secretory pathway. Myristoylation is necessary for GP2-mediated fusion activity.

The protein localises to the virion membrane. The protein resides in the host endoplasmic reticulum membrane. It localises to the host Golgi apparatus membrane. Its subcellular location is the host cell membrane. Functionally, functions as a cleaved signal peptide that is retained as the third component of the GP complex (GP-C). Helps to stabilize the spike complex in its native conformation. The SSP is required for efficient glycoprotein expression, post-translational maturation cleavage of G1 and G2, glycoprotein transport to the cell surface plasma membrane, formation of infectious virus particles, and acid pH-dependent glycoprotein-mediated cell fusion. Its function is as follows. Forms the virion spikes together with glycoprotein G2. The glycoprotein spike trimers are connected to the underlying matrix. Interacts with the host receptor. Mediates virus attachment to the host primary receptor alpha-dystroglycan DAG1 (alpha-DG) at the cell surface. This attachment induces virion internalization apparently through macropinocytosis. Following endocytosis, there is a pH-dependent switch from binding DAG1 to the host lysosomal receptor LAMP1. This latter binding triggers the dissociation of GP1, exposing the fusion subunit, GP2, such that fusion can occur. Down-modulates host DAG1. Forms the virion spikes together with glycoprotein G1. The glycoprotein spike trimers are connected to the underlying matrix. Class I viral fusion protein that directs fusion of viral and host endosomal membranes, leading to delivery of the nucleocapsid into the cytoplasm. Membrane fusion is mediated by irreversible conformational changes induced by acidification. This chain is Pre-glycoprotein polyprotein GP complex, found in Homo sapiens (Human).